A 690-amino-acid chain; its full sequence is Methionine--tRNA ligase (690 aa).

A 'HIGH' region motif is present at residues P12–H22. Residues C144, C147, C157, and C160 each coordinate Zn(2+). The 'KMSKS' region signature appears at Q333 to S337. ATP is bound at residue K336. In terms of domain architecture, tRNA-binding spans K535 to K632.

The protein belongs to the class-I aminoacyl-tRNA synthetase family. MetG type 1 subfamily. In terms of assembly, homodimer. Zn(2+) serves as cofactor.

It is found in the cytoplasm. It catalyses the reaction tRNA(Met) + L-methionine + ATP = L-methionyl-tRNA(Met) + AMP + diphosphate. In terms of biological role, is required not only for elongation of protein synthesis but also for the initiation of all mRNA translation through initiator tRNA(fMet) aminoacylation. The sequence is that of Methionine--tRNA ligase from Picrophilus torridus (strain ATCC 700027 / DSM 9790 / JCM 10055 / NBRC 100828 / KAW 2/3).